The primary structure comprises 778 residues: Preasperterpenoid A synthase PvPS (778 aa).

Residues 1 to 414 (MAATKKSTAT…HRYNFHKPAA (414 aa)) form a terpene cyclase region. Residues Asp-176 and Asp-180 each contribute to the Mg(2+) site. Asp-176 is a binding site for substrate. The DDXXD 1 motif lies at 176–180 (DDILD). Substrate-binding positions include 266–269 (RVIN), Asn-310, 314–318 (SWEKE), and 406–407 (RY). The NSE/DTE signature appears at 310–318 (NDYFSWEKE). Positions 414–431 (AKENEDTDDEGAKSDDSK) are enriched in basic and acidic residues. The interval 415–778 (KENEDTDDEG…LRLLLKRLQV (364 aa)) is prenyltransferase. Positions 416 to 454 (ENEDTDDEGAKSDDSKTTLNDSTDSTVVDVKTPATSGLL) are disordered. Positions 499, 502, and 531 each coordinate isopentenyl diphosphate. Positions 538 and 542 each coordinate Mg(2+). Residues 538 to 542 (DDIED) carry the DDXXD 2 motif. Arg-547 is a dimethylallyl diphosphate binding site. Arg-548 is a binding site for isopentenyl diphosphate. Residues Lys-625, Thr-626, Gln-662, Asn-669, Lys-679, and Lys-689 each coordinate dimethylallyl diphosphate.

The protein in the N-terminal section; belongs to the terpene synthase family. This sequence in the C-terminal section; belongs to the FPP/GGPP synthase family. Hexamer. The cofactor is Mg(2+).

It carries out the reaction isopentenyl diphosphate + (2E,6E)-farnesyl diphosphate = (2E,6E,10E)-geranylgeranyl diphosphate + diphosphate. It catalyses the reaction isopentenyl diphosphate + (2E,6E,10E)-geranylgeranyl diphosphate = (2E,6E,10E,14E)-geranylfarnesyl diphosphate + diphosphate. The enzyme catalyses (2E,6E,10E,14E)-geranylfarnesyl diphosphate = preasperterpenoid A + diphosphate. Its pathway is secondary metabolite biosynthesis; terpenoid biosynthesis. Its function is as follows. Bifunctional sesterterpene synthase that possesses both prenyl transferase and terpene cyclase activity, converting isopentenyl diphosphate and dimethylallyl diphosphate into geranylfarnesyl diphosphate (GFPP) and further converting GFPP into preasperterpenoid A. This is Preasperterpenoid A synthase PvPS from Talaromyces verruculosus (Penicillium verruculosum).